Here is a 603-residue protein sequence, read N- to C-terminus: NADPH-dependent diflavin oxidoreductase 1 (603 aa).

Residues 8-152 (VLVLYGSETG…SFVRWTGRLY (145 aa)) enclose the Flavodoxin-like domain. FMN is bound by residues 14-19 (SETGNA), 61-64 (STTG), 99-108 (LGDSTYLKFN), and glutamate 134. The 248-residue stretch at 210–457 (PDGWTATLVG…RKPVLSPIHG (248 aa)) folds into the FAD-binding FR-type domain. FAD is bound by residues arginine 358, 388–391 (RDFS), and 429–432 (GLCS). Residues threonine 472, 528–529 (SR), and 534–538 (KIYVQ) contribute to the NADP(+) site. Tryptophan 603 contacts FAD.

It belongs to the NADPH-dependent diflavin oxidoreductase NDOR1 family. In the N-terminal section; belongs to the flavodoxin family. The protein in the C-terminal section; belongs to the flavoprotein pyridine nucleotide cytochrome reductase family. As to quaternary structure, interacts with DRE2; as part of the cytosolic iron-sulfur (Fe-S) protein assembly (CIA) machinery. FAD serves as cofactor. The cofactor is FMN.

Its subcellular location is the cytoplasm. It is found in the mitochondrion. The enzyme catalyses 2 oxidized [2Fe-2S]-[protein] + NADPH = 2 reduced [2Fe-2S]-[protein] + NADP(+) + H(+). In terms of biological role, NADPH-dependent reductase which is a central component of the cytosolic iron-sulfur (Fe-S) protein assembly (CIA) machinery. Transfers electrons from NADPH via its FAD and FMN prosthetic groups to the [2Fe-2S] cluster of DRE2, another key component of the CIA machinery. In turn, this reduced cluster provides electrons for assembly of cytosolic iron-sulfur cluster proteins. Positively controls H(2)O(2)-induced cell death. In Gibberella zeae (strain ATCC MYA-4620 / CBS 123657 / FGSC 9075 / NRRL 31084 / PH-1) (Wheat head blight fungus), this protein is NADPH-dependent diflavin oxidoreductase 1.